A 240-amino-acid polypeptide reads, in one-letter code: Ribonuclease 3 (240 aa).

Residues 9 to 141 form the RNase III domain; it reads VEEFQKKTGI…LLAAIYLDQG (133 aa). Glu-54 is a Mg(2+) binding site. Residue Asp-58 is part of the active site. Asp-127 and Glu-130 together coordinate Mg(2+). The active site involves Glu-130. The DRBM domain occupies 168-237; that stretch reads DYKTALQEIV…ARIAYEKLLK (70 aa).

It belongs to the ribonuclease III family. As to quaternary structure, homodimer. The cofactor is Mg(2+).

The protein resides in the cytoplasm. The enzyme catalyses Endonucleolytic cleavage to 5'-phosphomonoester.. Digests double-stranded RNA. Involved in the processing of primary rRNA transcript to yield the immediate precursors to the large and small rRNAs (23S and 16S). Processes some mRNAs, and tRNAs when they are encoded in the rRNA operon. Processes pre-crRNA and tracrRNA of type II CRISPR loci if present in the organism. The protein is Ribonuclease 3 of Thermotoga petrophila (strain ATCC BAA-488 / DSM 13995 / JCM 10881 / RKU-1).